The chain runs to 1336 residues: Lysine-specific demethylase 2B (1336 aa).

Residues 1–25 (MAGPQMGGSAEDHPPRKRHAAEKQK) are disordered. Residues 15-25 (PRKRHAAEKQK) are compositionally biased toward basic residues. Phosphoserine is present on Ser57. The JmjC domain maps to 178 to 346 (FSHTKLEHLV…MQLRIYEIED (169 aa)). Thr239 provides a ligand contact to substrate. 2 residues coordinate Fe cation: His242 and Asp244. Lys259 is a substrate binding site. His314 contributes to the Fe cation binding site. Residues 410–430 (MEEEACDQQPQEEEEKDEEGE) are compositionally biased toward acidic residues. The disordered stretch occupies residues 410 to 465 (MEEEACDQQPQEEEEKDEEGEGRDRAPKPPTDGSTSPTSTPSEDQEALGKKPKAPA). Low complexity predominate over residues 440 to 451 (TDGSTSPTSTPS). Phosphoserine occurs at positions 474 and 477. Residue Thr493 is modified to Phosphothreonine. Ser497 carries the phosphoserine modification. The segment at 606–652 (ARRRRTRCRKCEACLRTECGECHFCKDMKKFGGPGRMKQSCIMRQCI) adopts a CXXC-type zinc-finger fold. 16 residues coordinate Zn(2+): Cys613, Cys616, Cys619, Cys624, Cys627, Cys630, Cys646, Cys651, Cys662, Cys665, Cys688, Cys691, His696, Cys699, Cys719, and Cys722. The PHD-type zinc-finger motif lies at 659–725 (TAVCLVCGEA…CWECPKCNHA (67 aa)). 2 disordered regions span residues 727 to 843 (KTGK…SLSP) and 855 to 1034 (QLKP…SPPK). The segment covering 749 to 799 (KEQKMNRDNKEGQEPAKRRSECEEAPRRRSDEHSKKVPPDGLLRRKSDDVH) has biased composition (basic and acidic residues). Residues 819–843 (SSLQTSPGSSSHLSPRPPLGSSLSP) show a composition bias toward low complexity. Residues Lys857 and Lys890 each participate in a glycyl lysine isopeptide (Lys-Gly) (interchain with G-Cter in SUMO2) cross-link. Positions 902–911 (PKTRESDHSR) are enriched in basic and acidic residues. Basic residues predominate over residues 932–941 (KVKMRRKRRL). Positions 942–960 (PNKELSRELSKELNHEIQR) are enriched in basic and acidic residues. Residues 943-971 (NKELSRELSKELNHEIQRTENSLANENQQ) adopt a coiled-coil conformation. Residue Ser951 is modified to Phosphoserine. Over residues 961–971 (TENSLANENQQ) the composition is skewed to polar residues. A phosphoserine mark is found at Ser975, Ser979, Ser1018, and Ser1031. Positions 1014–1024 (PSLRSPPRVIS) are enriched in low complexity. Residues 1059-1105 (DGAAHVMHREVWMAVFSYLSHQDLCVCMRVCRTWNRWCCDKRLWTRI) form the F-box domain. LRR repeat units lie at residues 1093-1120 (NRWCCDKRLWTRIDLNHCKSITPLMLSG), 1133-1154 (WTNISKKQLSWLINRLPGLRDL), 1156-1182 (LSGCSWIAVSALCSSSCPLLRTLDVQW), 1222-1247 (GLDITDASLRLIIRHMPLLSKLHLSY), 1248-1277 (CNHVTDQSINLLTAVGTTTRDSLTEINLSD), 1278-1302 (CNKVTDQCLSFFKRCGNICHIDLRY), and 1303-1336 (CKQVTKEGCEQFIAEMSVSVQFGQVEEKLLQKLS).

This sequence belongs to the JHDM1 histone demethylase family. In terms of assembly, interacts with SKP1, forming heterodimers. The heterodimeric KDM2B-SKP1 complex interacts with the PCGF1-BCORL1 heterodimeric complex to form a homotetrameric polycomb repression complex 1 (PRC1.1). Directly interacts with CUL1. The SKP1-KDM2B complex interacts with UBB. It depends on Fe(2+) as a cofactor.

It is found in the nucleus. Its subcellular location is the nucleolus. The protein resides in the chromosome. The catalysed reaction is N(6),N(6)-dimethyl-L-lysyl(36)-[histone H3] + 2 2-oxoglutarate + 2 O2 = L-lysyl(36)-[histone H3] + 2 formaldehyde + 2 succinate + 2 CO2. With respect to regulation, histone demethylase activity is inhibited by fumarate. Its function is as follows. Histone demethylase that demethylates 'Lys-4' and 'Lys-36' of histone H3, thereby playing a central role in histone code. Preferentially demethylates trimethylated H3 'Lys-4' and dimethylated H3 'Lys-36' residue while it has weak or no activity for mono- and tri-methylated H3 'Lys-36'. Preferentially binds the transcribed region of ribosomal RNA and represses the transcription of ribosomal RNA genes which inhibits cell growth and proliferation. May also serve as a substrate-recognition component of the SCF (SKP1-CUL1-F-box protein)-type E3 ubiquitin ligase complex. This is Lysine-specific demethylase 2B (KDM2B) from Homo sapiens (Human).